The chain runs to 536 residues: Bicoumarin synthase desC (536 aa).

The helical transmembrane segment at 12–32 threads the bilayer; the sequence is YVALAGITGFFLVFLGFLVVI. N-linked (GlcNAc...) asparagine glycosylation is found at Asn149 and Asn371. Cys480 contributes to the heme binding site.

It belongs to the cytochrome P450 family. It depends on heme as a cofactor.

It is found in the membrane. The enzyme catalyses 2 7-demethylsiderin + NADPH + O2 = desertorin A + NADP(+) + 2 H2O. Its pathway is secondary metabolite biosynthesis. Its function is as follows. Non-reducing polyketide synthase; part of the gene cluster that mediates the biosynthesis of the bicoumarin desertorin. The non-reducing polyketide synthase desS first catalyzes the formation of the pentaketidic 4,7-dihydroxy-5-methylcoumarin from acetyl coenzyme A and 4 malonyl coenzyme A molecules. Further O-methylation by desB leads to the formation of 7-demethylsiderin. Then, an oxidative phenol coupling catalyzed by the cytochrome P450 monooxygenase desC forms the 6,8'-dimer M-desertorin A via dimerization the monomeric precursor, 7-demethylsiderin. M-desertorin A is further converted to M-desertorin C. This chain is Bicoumarin synthase desC, found in Aspergillus desertorum (Emericella desertorum).